The primary structure comprises 470 residues: Ribulose bisphosphate carboxylase large chain (470 aa).

Residues Asn118 and Thr168 each coordinate substrate. Lys170 acts as the Proton acceptor in catalysis. Lys172 provides a ligand contact to substrate. Residues Lys196, Asp198, and Glu199 each contribute to the Mg(2+) site. Position 196 is an N6-carboxylysine (Lys196). His289 functions as the Proton acceptor in the catalytic mechanism. Substrate is bound by residues Arg290, His322, and Ser374. An Interacts with RbcX2 motif is present at residues 459 to 465 (EIKFEFD).

It belongs to the RuBisCO large chain family. Type I subfamily. Heterohexadecamer of 8 large chains and 8 small chains; disulfide-linked. The disulfide link is formed within the large subunit homodimers. Requires Mg(2+) as cofactor. The disulfide bond which can form in the large chain dimeric partners within the hexadecamer appears to be associated with oxidative stress and protein turnover.

The protein resides in the carboxysome. The catalysed reaction is 2 (2R)-3-phosphoglycerate + 2 H(+) = D-ribulose 1,5-bisphosphate + CO2 + H2O. The enzyme catalyses D-ribulose 1,5-bisphosphate + O2 = 2-phosphoglycolate + (2R)-3-phosphoglycerate + 2 H(+). Functionally, ruBisCO catalyzes two reactions: the carboxylation of D-ribulose 1,5-bisphosphate, the primary event in carbon dioxide fixation, as well as the oxidative fragmentation of the pentose substrate in the photorespiration process. Both reactions occur simultaneously and in competition at the same active site. The polypeptide is Ribulose bisphosphate carboxylase large chain (Picosynechococcus sp. (strain ATCC 27264 / PCC 7002 / PR-6) (Agmenellum quadruplicatum)).